A 303-amino-acid polypeptide reads, in one-letter code: 34 kDa antigenic protein homolog (303 aa).

A run of 4 helical transmembrane segments spans residues 42-62 (IAVA…MFTL), 77-97 (TGLP…ALVP), 102-122 (HVTV…SATF), and 134-154 (LWVV…ALLV). Low complexity-rich tracts occupy residues 194-207 (QGAQ…SPGP) and 215-255 (GYGS…HQGP). Residues 194-303 (QGAQQAAGLQ…QSSSPGGAPV (110 aa)) are disordered. A compositionally biased stretch (pro residues) spans 256–271 (STPPTGFPSFSPPPPV). A compositionally biased stretch (polar residues) spans 274-286 (GTGSQAGSAPVNY). The segment covering 287–303 (SNPSGGEQSSSPGGAPV) has biased composition (low complexity).

To M.paratuberculosis 34 kDa antigenic protein.

It is found in the cell membrane. This chain is 34 kDa antigenic protein homolog, found in Mycobacterium bovis (strain ATCC BAA-935 / AF2122/97).